The primary structure comprises 211 residues: MGGKWSKCSMKGWPTIRERMKRAELQPPEPAAEGVGAASRDLEKHGAITSSNTAATNADCAWLEAQEDEEVGFPVRPQVPLRPMTYKGALDLSHFLKEKGGLEGLIYSQKRQDILDLWVYHTQGYFPDWQNYTPGPGIRYPLCFGWCFKLVPMDPDQVEEANEGENNSLLHPISLHGMDDPEKEVLVWKFDSRLAFRHMAREVHPEYYKDC.

Glycine 2 carries N-myristoyl glycine; by host lipidation. Position 6 is a phosphoserine; by host (serine 6). The interval 67–70 (EDEE) is acidic; interacts with host PACS1 and PACS2; stabilizes the interaction of NEF/MHC-I with host AP1M1; necessary for MHC-I internalization. Residues 74–83 (PVRPQVPLRP) form an SH3-binding; interaction with Src family tyrosine kinases region. A PxxP; stabilizes the interaction of NEF/MHC-I with host AP1M1; necessary for MHC-I internalization motif is present at residues 77-80 (PQVP). Positions 113 to 129 (DILDLWVYHTQGYFPDW) are mediates dimerization, Nef-PTE1 interaction. The interval 153 to 185 (MDPDQVEEANEGENNSLLHPISLHGMDDPEKEV) is binding to ATP6V1H. A Dileucine internalization motif; necessary for CD4 internalization motif is present at residues 169–170 (LL). The Diacidic; necessary for CD4 internalization motif lies at 179–180 (DD).

Belongs to the lentivirus primate group Nef protein family. As to quaternary structure, monomer; cytosolic form. Homodimer; membrane bound form. Interacts with Nef associated p21-activated kinase (PAK2); this interaction activates PAK2. Associates with the Nef-MHC-I-AP1 complex; this complex is required for MHC-I internalization. Interacts (via C-terminus) with host PI3-kinase. Interacts with host PACS1; this interaction seems to be weak. Interacts with host PACS2. Interacts with host LCK and MAPK3; these interactions inhibit the kinase activity of the latter. Interacts with host ATP6V1H; this interaction may play a role in CD4 endocytosis. Associates with the CD4-Nef-AP2 complex; this complex is required for CD4 internalization. Interacts with host AP2 subunit alpha and AP2 subunit sigma2. Interacts with TCR-zeta chain; this interaction up-regulates the Fas ligand (FasL) surface expression. Interacts with host HCK, LYN, and SRC; these interactions activate the Src family kinases. Interacts with MAP3K5; this interaction inhibits the Fas and TNFR-mediated death signals. Interacts with beta-COP and PTE1. Interacts with human RACK1; this increases Nef phosphorylation by PKC. Interacts with TP53; this interaction decreases the half-life of TP53, protecting the infected cell against p53-mediated apoptosis. In terms of processing, the virion-associated Nef proteins are cleaved by the viral protease to release the soluble C-terminal core protein. Nef is probably cleaved concomitantly with viral structural proteins on maturation of virus particles. Myristoylated. Post-translationally, phosphorylated on serine residues, probably by host PKCdelta and theta.

It localises to the host cell membrane. The protein resides in the virion. It is found in the secreted. The protein localises to the host Golgi apparatus membrane. Its function is as follows. Factor of infectivity and pathogenicity, required for optimal virus replication. Alters numerous pathways of T-lymphocyte function and down-regulates immunity surface molecules in order to evade host defense and increase viral infectivity. Alters the functionality of other immunity cells, like dendritic cells, monocytes/macrophages and NK cells. Functionally, in infected CD4(+) T-lymphocytes, down-regulates the surface MHC-I, mature MHC-II, CD4, CD28, CCR5 and CXCR4 molecules. Mediates internalization and degradation of host CD4 through the interaction of with the cytoplasmic tail of CD4, the recruitment of AP-2 (clathrin adapter protein complex 2), internalization through clathrin coated pits, and subsequent transport to endosomes and lysosomes for degradation. Diverts host MHC-I molecules to the trans-Golgi network-associated endosomal compartments by an endocytic pathway to finally target them for degradation. MHC-I down-regulation may involve AP-1 (clathrin adapter protein complex 1) or possibly Src family kinase-ZAP70/Syk-PI3K cascade recruited by PACS2. In consequence infected cells are masked for immune recognition by cytotoxic T-lymphocytes. Decreasing the number of immune receptors also prevents reinfection by more HIV particles (superinfection). Down-regulates host SERINC3 and SERINC5 thereby excluding these proteins from the viral particles. Virion infectivity is drastically higher when SERINC3 or SERINC5 are excluded from the viral envelope, because these host antiviral proteins impair the membrane fusion event necessary for subsequent virion penetration. In terms of biological role, bypasses host T-cell signaling by inducing a transcriptional program nearly identical to that of anti-CD3 cell activation. Interaction with TCR-zeta chain up-regulates the Fas ligand (FasL). Increasing surface FasL molecules and decreasing surface MHC-I molecules on infected CD4(+) cells send attacking cytotoxic CD8+ T-lymphocytes into apoptosis. Plays a role in optimizing the host cell environment for viral replication without causing cell death by apoptosis. Protects the infected cells from apoptosis in order to keep them alive until the next virus generation is ready to strike. Inhibits the Fas and TNFR-mediated death signals by blocking MAP3K5/ASK1. Decreases the half-life of TP53, protecting the infected cell against p53-mediated apoptosis. Inhibits the apoptotic signals regulated by the Bcl-2 family proteins through the formation of a Nef/PI3-kinase/PAK2 complex that leads to activation of PAK2 and induces phosphorylation of host BAD. Its function is as follows. Extracellular Nef protein targets CD4(+) T-lymphocytes for apoptosis by interacting with CXCR4 surface receptors. This chain is Protein Nef, found in Homo sapiens (Human).